Reading from the N-terminus, the 92-residue chain is Kinetoplastid membrane protein 11C (92 aa).

It belongs to the KMP-11 family. In terms of assembly, monomer.

Its subcellular location is the cytoplasm. The protein resides in the cytoskeleton. It is found in the cell projection. The protein localises to the cilium. It localises to the flagellum. Its function is as follows. May be involved in the regulation of the cytoskeleton through interaction with the subpellicular microtubules. May be involved in parasite mobility and attachment to the surface of the host cell. Behaves as a strong immunogen during infection. In Leishmania infantum, this protein is Kinetoplastid membrane protein 11C (KMP-11C).